A 137-amino-acid polypeptide reads, in one-letter code: L-ectoine synthase (137 aa).

Positions 118 to 137 (VHREDGSYAPADEADDQKPL) are disordered.

Belongs to the ectoine synthase family.

The enzyme catalyses (2S)-4-acetamido-2-aminobutanoate = L-ectoine + H2O. The protein operates within amine and polyamine biosynthesis; ectoine biosynthesis; L-ectoine from L-aspartate 4-semialdehyde: step 3/3. Seems to require potassium ions for its activity and stability. Slightly inhibited by N-ethylmaleimide. Catalyzes the circularization of gamma-N-acetyl-alpha,gamma-diaminobutyric acid (ADABA) to ectoine (1,4,5,6-tetrahydro-2-methyl-4-pyrimidine carboxylic acid), which is an excellent osmoprotectant. Does not act on N-acetylated amino acids like N-alpha-acetyl-L-asparagine,N-alpha-acetyl-L-ornithine, N-alpha-acetyl-L-lysine and N-epsilon-acetyl-L-lysine. This is L-ectoine synthase (ectC) from Halomonas elongata (strain ATCC 33173 / DSM 2581 / NBRC 15536 / NCIMB 2198 / 1H9).